Reading from the N-terminus, the 245-residue chain is Putative protein phosphatase 2C-like protein 45 (245 aa).

In terms of domain architecture, PPM-type phosphatase spans methionine 1–leucine 188.

The protein belongs to the PP2C family.

This Arabidopsis thaliana (Mouse-ear cress) protein is Putative protein phosphatase 2C-like protein 45.